Here is a 155-residue protein sequence, read N- to C-terminus: uncharacterized protein (155 aa).

Positions 135–155 (SQANSKNDSNSKDDLPNPFSV) are disordered.

This is an uncharacterized protein from Acidianus convivator (ATV).